We begin with the raw amino-acid sequence, 585 residues long: Protein NRT1/ PTR FAMILY 8.3 (585 aa).

Residue G2 is modified to N-acetylglycine. A helical transmembrane segment spans residues 91–111 (WQGTCYLTPLIGAVLADAYWG). Residue T115 is modified to Phosphothreonine. The next 10 membrane-spanning stretches (helical) occupy residues 116–136 (IACF…SASV), 154–174 (PAQY…TGGI), 200–220 (FFNW…SLLV), 228–248 (WGLG…SFFF), 351–371 (FPIW…STMF), 387–407 (LPPA…VPLY), 431–451 (MGIG…VEII), 472–492 (VLWQ…YFIG), 511–531 (ALAL…LTLV), and 556–576 (FFWL…FSAA).

The protein belongs to the major facilitator superfamily. Proton-dependent oligopeptide transporter (POT/PTR) (TC 2.A.17) family. Highly expressed in young leaves, roots and germinating seeds, intermediately in stems, flowers and mature leaves and at low level in siliques.

The protein localises to the vacuole membrane. Its activity is regulated as follows. Inhibited by leucyl-ethionine. Peptide transporter. Mediates the transport of di- and tripeptides. High affinity, low capacity transporter. Can also transport histidine. The chain is Protein NRT1/ PTR FAMILY 8.3 (NPF8.3) from Arabidopsis thaliana (Mouse-ear cress).